Here is a 249-residue protein sequence, read N- to C-terminus: Triosephosphate isomerase (249 aa).

Substrate is bound by residues asparagine 10 and lysine 12. Histidine 94 acts as the Electrophile in catalysis. The Proton acceptor role is filled by glutamate 166.

This sequence belongs to the triosephosphate isomerase family. Homodimer.

It carries out the reaction D-glyceraldehyde 3-phosphate = dihydroxyacetone phosphate. It participates in carbohydrate biosynthesis; gluconeogenesis. Its pathway is carbohydrate degradation; glycolysis; D-glyceraldehyde 3-phosphate from glycerone phosphate: step 1/1. This is Triosephosphate isomerase (tpiA) from Emericella nidulans (strain FGSC A4 / ATCC 38163 / CBS 112.46 / NRRL 194 / M139) (Aspergillus nidulans).